The primary structure comprises 110 residues: Insulin-1 (110 aa).

The N-terminal stretch at 1–24 is a signal peptide; the sequence is MALWMRFLPLLALLVLWEPKPAQA. 3 cysteine pairs are disulfide-bonded: cysteine 31–cysteine 96, cysteine 43–cysteine 109, and cysteine 95–cysteine 100. The propeptide at 57 to 87 is c peptide; it reads EVEDPQVPQLELGGGPEAGDLQTLALEVARQ.

This sequence belongs to the insulin family. In terms of assembly, heterodimer of a B chain and an A chain linked by two disulfide bonds.

The protein localises to the secreted. Its function is as follows. Insulin decreases blood glucose concentration. It increases cell permeability to monosaccharides, amino acids and fatty acids. It accelerates glycolysis, the pentose phosphate cycle, and glycogen synthesis in liver. In Rattus norvegicus (Rat), this protein is Insulin-1 (Ins1).